The primary structure comprises 178 residues: MRYIKSEPYYEGLPPFNVSGSPFNVVPIHNYPELMKDTCALINAEWPRSETARMRSLEASCDSLPCSLVLTTEGMCRVIAHLKLSPINSKKKACFVESVVVDKRHRGQGFGKLIMKFAEDYCRVVLDLKTIYLSTIDQDGFYERIGYEYCAPITMYGPRHCELPSLQNAKKKYMKKVL.

Residues 26-178 (VPIHNYPELM…AKKKYMKKVL (153 aa)) enclose the N-acetyltransferase domain. Substrate contacts are provided by residues Arg48, 53-56 (RMRS), Asn88, and Ser98. Acetyl-CoA contacts are provided by residues 99 to 101 (VVV) and 107 to 112 (GQGFGK). Ser134 is a binding site for substrate. Acetyl-CoA is bound at residue Gln138.

This sequence belongs to the acetyltransferase family.

The catalysed reaction is N-terminal L-aspartyl-L-aspartyl-L-aspartyl-[protein] + acetyl-CoA = N-terminal N-acetyl-L-aspartyl-L-aspartyl-L-aspartyl-[protein] + CoA + H(+). It carries out the reaction N-terminal L-glutamyl-L-glutamyl-L-glutamyl-[protein] + acetyl-CoA = N-terminal N-acetyl-L-glutamyl-L-glutamyl-L-glutamyl-[protein] + CoA + H(+). In terms of biological role, N-alpha-acetyltransferase that acetylates the amino terminal acidic residue of proteins devoid of initiator methionine. Preferentially acts on proteins starting with Asp-Asp-Asp and Glu-Glu-Glu sequences. In vitro, shows high activity towards N-terminal sequences starting with Met-Asp-Glu-Leu, Met-Glu-Glu-Glu and Met-Asp-Asp-Asp. This chain is N-alpha-acetyltransferase 80, found in Drosophila melanogaster (Fruit fly).